A 119-amino-acid chain; its full sequence is Ribonuclease P protein component (119 aa).

Belongs to the RnpA family. In terms of assembly, consists of a catalytic RNA component (M1 or rnpB) and a protein subunit.

The enzyme catalyses Endonucleolytic cleavage of RNA, removing 5'-extranucleotides from tRNA precursor.. In terms of biological role, RNaseP catalyzes the removal of the 5'-leader sequence from pre-tRNA to produce the mature 5'-terminus. It can also cleave other RNA substrates such as 4.5S RNA. The protein component plays an auxiliary but essential role in vivo by binding to the 5'-leader sequence and broadening the substrate specificity of the ribozyme. This chain is Ribonuclease P protein component, found in Bacillus cereus (strain ZK / E33L).